The chain runs to 317 residues: DNA-directed RNA polymerase subunit alpha (317 aa).

The alpha N-terminal domain (alpha-NTD) stretch occupies residues 1-230 (MIEIEMEKPK…EHLNLFITLT (230 aa)). An alpha C-terminal domain (alpha-CTD) region spans residues 247 to 317 (KEKVLEMTIE…LGLGLRPSDE (71 aa)).

The protein belongs to the RNA polymerase alpha chain family. Homodimer. The RNAP catalytic core consists of 2 alpha, 1 beta, 1 beta' and 1 omega subunit. When a sigma factor is associated with the core the holoenzyme is formed, which can initiate transcription.

It carries out the reaction RNA(n) + a ribonucleoside 5'-triphosphate = RNA(n+1) + diphosphate. DNA-dependent RNA polymerase catalyzes the transcription of DNA into RNA using the four ribonucleoside triphosphates as substrates. This Alkaliphilus oremlandii (strain OhILAs) (Clostridium oremlandii (strain OhILAs)) protein is DNA-directed RNA polymerase subunit alpha.